Here is a 448-residue protein sequence, read N- to C-terminus: MPRWLSAPEHARHRTVAASAGAPWTPRRVAMIAVHTSPLEIPGCGDAGGLNVYVAQIARRLASRGIDVDVFTRATRRDLPPQQRLAPGVTVRNVVAGPLEPLPKDELPVHLCAFTAAVLRAEAMREPGWYDVIHSHYWLSGEVGRVASQRWGVPLVHTMHTLAKVKNAALAEGDVPEPGRRVIGEADVVAAADRLVTNTWTEARQLVDLYGAEPDRIRVVPPGVETAIFRPGDSARARRRLGLPIDGCVVLFVGRLQPLKGPDIAVRAAAEFLSTHPGMRSTFRLVIVGGPSGSRSTEPERLRALAADLGVADAVIFAPPMPPDRLVEFYRAATVTIVPSHSESFGLVALESQACGTPVVAARVGGLTTAVRDGESGLLVDGHDPARYAGAIGRLLDPGLRAELVRGAVAHAMRFHWDNTVEGILGVYRDALAERRTAATQRLASRVG.

1D-myo-inositol 3-phosphate contacts are provided by residues histidine 35, aspartate 46–asparagine 51, lysine 104, tyrosine 137, threonine 161, and arginine 181. Residue glycine 49 coordinates UDP-N-acetyl-alpha-D-glucosamine. UDP-N-acetyl-alpha-D-glucosamine contacts are provided by arginine 255, lysine 260, and methionine 321. Mg(2+) contacts are provided by tyrosine 330, arginine 331, and alanine 333. The UDP-N-acetyl-alpha-D-glucosamine site is built by glutamate 343 and glutamate 351. Threonine 357 is a Mg(2+) binding site.

The protein belongs to the glycosyltransferase group 1 family. MshA subfamily. Homodimer.

The catalysed reaction is 1D-myo-inositol 3-phosphate + UDP-N-acetyl-alpha-D-glucosamine = 1D-myo-inositol 2-acetamido-2-deoxy-alpha-D-glucopyranoside 3-phosphate + UDP + H(+). Catalyzes the transfer of a N-acetyl-glucosamine moiety to 1D-myo-inositol 3-phosphate to produce 1D-myo-inositol 2-acetamido-2-deoxy-glucopyranoside 3-phosphate in the mycothiol biosynthesis pathway. This is D-inositol 3-phosphate glycosyltransferase from Acidothermus cellulolyticus (strain ATCC 43068 / DSM 8971 / 11B).